We begin with the raw amino-acid sequence, 244 residues long: Serine acetyltransferase (244 aa).

The protein belongs to the transferase hexapeptide repeat family.

The protein localises to the cytoplasm. It carries out the reaction L-serine + acetyl-CoA = O-acetyl-L-serine + CoA. It functions in the pathway amino-acid biosynthesis; L-cysteine biosynthesis; L-cysteine from L-serine: step 1/2. The sequence is that of Serine acetyltransferase (cysE) from Synechococcus elongatus (strain ATCC 33912 / PCC 7942 / FACHB-805) (Anacystis nidulans R2).